The following is a 118-amino-acid chain: Large ribosomal subunit protein bL20 (118 aa).

It belongs to the bacterial ribosomal protein bL20 family.

Functionally, binds directly to 23S ribosomal RNA and is necessary for the in vitro assembly process of the 50S ribosomal subunit. It is not involved in the protein synthesizing functions of that subunit. The chain is Large ribosomal subunit protein bL20 from Staphylococcus haemolyticus (strain JCSC1435).